The following is a 247-amino-acid chain: Probable transcriptional regulatory protein plu2109 (247 aa).

This sequence belongs to the TACO1 family.

The protein resides in the cytoplasm. The sequence is that of Probable transcriptional regulatory protein plu2109 from Photorhabdus laumondii subsp. laumondii (strain DSM 15139 / CIP 105565 / TT01) (Photorhabdus luminescens subsp. laumondii).